Consider the following 1893-residue polypeptide: Plexin-A4 (1893 aa).

The signal sequence occupies residues 1-23 (MKAMPWNWTCLLSHLLVVGMGSS). The Sema domain maps to 24-506 (TLLPRQPPQL…SERQLTRVPV (483 aa)). Residues 24–1236 (TLLPRQPPQL…IAPDSPLSLP (1213 aa)) are Extracellular-facing. 10 disulfide bridges follow: C94–C103, C129–C137, C283–C404, C299–C355, C373–C392, C509–C526, C515–C557, C518–C535, C529–C541, and C592–C611. The PSI 1 domain maps to 508–558 (SCGQYRSCGECLGSGDPHCGWCVLHNTCTRKERCERSREPRRFASEMKQCV). N-linked (GlcNAc...) asparagine glycosylation is present at N654. PSI domains are found at residues 654–701 (NCSV…EDCP) and 802–855 (KCGA…SKCT). 4 consecutive IPT/TIG domains span residues 857–951 (PRIT…YYFM), 953–1036 (LTLA…FQYV), 1039–1138 (PTIV…FTYY), and 1141–1229 (PVFE…YIAP). N-linked (GlcNAc...) asparagine glycans are attached at residues N1006, N1131, and N1179. Residues 1237–1257 (AIVSIAVAGGLLIIFIVAVLI) traverse the membrane as a helical segment. Residues 1258–1893 (AYKRKSRESD…QVITLMSLDS (636 aa)) lie on the Cytoplasmic side of the membrane. K1349 is subject to N6-acetyllysine.

Belongs to the plexin family. In terms of assembly, interacts with NRP1 and NRP2. As to expression, expressed in the developing nervous system. Widely expressed in both the central and peripheral nervous systems. Expressed in the peripheral ganglia, somatosensory, olfactory, visual, auditory and equilibrium systems.

The protein localises to the cell membrane. In terms of biological role, coreceptor for SEMA3A. Necessary for signaling by class 3 semaphorins and subsequent remodeling of the cytoskeleton. Plays a role in axon guidance in the developing nervous system. Class 3 semaphorins bind to a complex composed of a neuropilin and a plexin. The plexin modulates the affinity of the complex for specific semaphorins, and its cytoplasmic domain is required for the activation of down-stream signaling events in the cytoplasm. This is Plexin-A4 (Plxna4) from Mus musculus (Mouse).